We begin with the raw amino-acid sequence, 160 residues long: Transcription elongation factor GreA (160 aa).

Positions 3 to 84 (SIVNDKILLT…SKAKIIKADL (82 aa)) form a coiled coil.

This sequence belongs to the GreA/GreB family.

Necessary for efficient RNA polymerase transcription elongation past template-encoded arresting sites. The arresting sites in DNA have the property of trapping a certain fraction of elongating RNA polymerases that pass through, resulting in locked ternary complexes. Cleavage of the nascent transcript by cleavage factors such as GreA or GreB allows the resumption of elongation from the new 3'terminus. GreA releases sequences of 2 to 3 nucleotides. The polypeptide is Transcription elongation factor GreA (Mesomycoplasma hyopneumoniae (strain 7448) (Mycoplasma hyopneumoniae)).